The primary structure comprises 108 residues: Thioredoxin (108 aa).

The Thioredoxin domain occupies 2–108 (NKIIELTDQN…LKDFLDENIK (107 aa)). A disulfide bond links cysteine 32 and cysteine 35.

Belongs to the thioredoxin family.

Its function is as follows. Participates in various redox reactions through the reversible oxidation of its active center dithiol to a disulfide and catalyzes dithiol-disulfide exchange reactions. The polypeptide is Thioredoxin (trxA) (Buchnera aphidicola subsp. Schizaphis graminum (strain Sg)).